The sequence spans 447 residues: Cysteine--tRNA ligase (447 aa).

Cysteine 28 lines the Zn(2+) pocket. Residues 30–40 (PTVYNYIHIGN) carry the 'HIGH' region motif. Residues cysteine 211, histidine 236, and glutamate 240 each coordinate Zn(2+). Positions 268–272 (KMSKS) match the 'KMSKS' region motif. ATP is bound at residue lysine 271.

This sequence belongs to the class-I aminoacyl-tRNA synthetase family. Monomer. It depends on Zn(2+) as a cofactor.

It localises to the cytoplasm. The enzyme catalyses tRNA(Cys) + L-cysteine + ATP = L-cysteinyl-tRNA(Cys) + AMP + diphosphate. The polypeptide is Cysteine--tRNA ligase (Streptococcus thermophilus (strain CNRZ 1066)).